A 133-amino-acid chain; its full sequence is Ribosome-binding factor A (133 aa).

Belongs to the RbfA family. Monomer. Binds 30S ribosomal subunits, but not 50S ribosomal subunits or 70S ribosomes.

It localises to the cytoplasm. One of several proteins that assist in the late maturation steps of the functional core of the 30S ribosomal subunit. Associates with free 30S ribosomal subunits (but not with 30S subunits that are part of 70S ribosomes or polysomes). Required for efficient processing of 16S rRNA. May interact with the 5'-terminal helix region of 16S rRNA. This Pseudomonas fluorescens (strain Pf0-1) protein is Ribosome-binding factor A.